The chain runs to 245 residues: tRNA1(Val) (adenine(37)-N6)-methyltransferase (245 aa).

The protein belongs to the methyltransferase superfamily. tRNA (adenine-N(6)-)-methyltransferase family.

Its subcellular location is the cytoplasm. It catalyses the reaction adenosine(37) in tRNA1(Val) + S-adenosyl-L-methionine = N(6)-methyladenosine(37) in tRNA1(Val) + S-adenosyl-L-homocysteine + H(+). In terms of biological role, specifically methylates the adenine in position 37 of tRNA(1)(Val) (anticodon cmo5UAC). The chain is tRNA1(Val) (adenine(37)-N6)-methyltransferase from Klebsiella pneumoniae subsp. pneumoniae (strain ATCC 700721 / MGH 78578).